The chain runs to 129 residues: MFVWKDEFELGIDKIDNEHRKLFEIANKGYELLKNEFYVDKYDKIMDIIVELKEYAEFHFSEEEDYLASIGYKKLFTHKLEHDSFIKKVESFNIKEIDYDQDKYIQEMLDFVVTWIKEHILEKDREYID.

Fe cation is bound by residues histidine 19, histidine 59, glutamate 63, histidine 78, histidine 82, histidine 119, and aspartate 124.

This sequence belongs to the hemerythrin family. Monomer.

Its function is as follows. Oxygen-binding protein. May be involved in a storage mechanism or for delivery to oxygen-requiring enzymes. The oxygen-binding site contains two iron atoms. This Clostridium acetobutylicum (strain ATCC 824 / DSM 792 / JCM 1419 / IAM 19013 / LMG 5710 / NBRC 13948 / NRRL B-527 / VKM B-1787 / 2291 / W) protein is Bacteriohemerythrin.